Here is a 135-residue protein sequence, read N- to C-terminus: Histone H2B.4 (135 aa).

Composition is skewed to basic and acidic residues over residues 1–12 (MAPKAAEKKPVE) and 23–35 (EKKV…GGEK). The interval 1 to 43 (MAPKAAEKKPVEKTPAVKKPKAEKKVPTSKEGGEKKGKKKSKK) is disordered. An N6-acetyllysine mark is found at K8 and K24. K131 participates in a covalent cross-link: Glycyl lysine isopeptide (Lys-Gly) (interchain with G-Cter in ubiquitin).

The protein belongs to the histone H2B family. In terms of assembly, the nucleosome is a histone octamer containing two molecules each of H2A, H2B, H3 and H4 assembled in one H3-H4 heterotetramer and two H2A-H2B heterodimers. The octamer wraps approximately 147 bp of DNA. Post-translationally, can be acetylated to form H2BK6ac and H2BK33ac. In terms of processing, monoubiquitinated to form H2BK143ub1; may give a specific tag for epigenetic transcriptional activation. Expressed preferentially in meristematic tissues.

The protein localises to the nucleus. It is found in the chromosome. Functionally, core component of nucleosome. Nucleosomes wrap and compact DNA into chromatin, limiting DNA accessibility to the cellular machineries which require DNA as a template. Histones thereby play a central role in transcription regulation, DNA repair, DNA replication and chromosomal stability. DNA accessibility is regulated via a complex set of post-translational modifications of histones, also called histone code, and nucleosome remodeling. In Triticum aestivum (Wheat), this protein is Histone H2B.4 (TH153).